The following is a 1582-amino-acid chain: Adhesion G protein-coupled receptor B1 (1582 aa).

An N-terminal signal peptide occupies residues 1 to 33 (MRGQAAAPGPIWILAPLLLLLLLLGRWARAASG). At 34 to 948 (ADIGPGTEQC…ATMDKVTVPS (915 aa)) the chain is on the extracellular side. The N-linked (GlcNAc...) asparagine glycan is linked to Asn64. Residues 261-315 (AGGWKLWSLWGECTRDCGGGLQTRTRTCLPTLGVEGGGCEGVLEEGRLCNRKACG) enclose the TSP type-1 1 domain. 3 cysteine pairs are disulfide-bonded: Cys273-Cys309, Cys277-Cys314, and Cys288-Cys299. A disordered region spans residues 313 to 335 (ACGPTGRSSSRSQSLRSTDARRR). The segment covering 319 to 329 (RSSSRSQSLRS) has biased composition (low complexity). TSP type-1 domains are found at residues 354–407 (DPAA…AVCP), 409–462 (HGAW…ALCP), 467–520 (DGNW…QQCP), and 522–575 (DGKW…QRCP). 14 disulfides stabilise this stretch: Cys366–Cys400, Cys370–Cys406, Cys381–Cys390, Cys421–Cys456, Cys425–Cys461, Cys436–Cys446, Cys479–Cys514, Cys483–Cys519, Cys494–Cys504, Cys534–Cys569, Cys538–Cys574, Cys549–Cys559, Cys581–Cys616, and Cys604–Cys634. N-linked (GlcNAc...) asparagine glycosylation occurs at Asn401. Residue Asn607 is glycosylated (N-linked (GlcNAc...) asparagine). Thr609 bears the Phosphothreonine mark. 4 N-linked (GlcNAc...) asparagine glycosylation sites follow: Asn692, Asn844, Asn877, and Asn881. A GAIN-B domain is found at 760 to 939 (RDAYQVTDNL…AILAQLSADA (180 aa)). Disulfide bonds link Cys884–Cys921 and Cys909–Cys923. Residues 884 to 939 (CILWDETDGPSSSAPPQLGPWSWRGCRTVPLDALRTRCLCDRLSTFAILAQLSADA) are GPS. Positions 927 to 943 (STFAILAQLSADATMDK) are N-terminal stalk following vasculostatin-120 cleavage which is not required for signaling activity. Residues 949–969 (VTLIVGCGVSSLTLLMLVIIY) traverse the membrane as a helical segment. At 970 to 980 (VSVWRYIRSER) the chain is on the cytoplasmic side. A helical transmembrane segment spans residues 981 to 1001 (SVILINFCLSIISSNALILIG). Topologically, residues 1002–1008 (QTQTRNK) are extracellular. A helical transmembrane segment spans residues 1009-1029 (VVCTLVAAFLHFFFLSSFCWV). Topologically, residues 1030–1052 (LTEAWQSYMAVTGRLRSRLVRKR) are cytoplasmic. A helical membrane pass occupies residues 1053–1073 (FLCLGWGLPALVVAISVGFTK). Residues 1074 to 1093 (AKGYSTMNYCWLSLEGGLLY) lie on the Extracellular side of the membrane. The chain crosses the membrane as a helical span at residues 1094–1114 (AFVGPAAAVVLVNMVIGILVF). Topologically, residues 1115-1136 (NKLVSKDGITDKKLKERAGASL) are cytoplasmic. Residues 1137–1157 (WSSCVVLPLLALTWMSAVLAV) traverse the membrane as a helical segment. Over 1158-1166 (TDRRSALFQ) the chain is Extracellular. A helical transmembrane segment spans residues 1167 to 1187 (ILFAVFDSLEGFVIVMVHCIL). The Cytoplasmic segment spans residues 1188–1582 (RREVQDAVKC…QDIIDLQTEV (395 aa)). An involved in interaction with MAGI1 region spans residues 1363–1582 (YSINIDQMPQ…QDIIDLQTEV (220 aa)). The tract at residues 1382–1549 (PDASFPTRSP…AWVKKELEPL (168 aa)) is disordered. A compositionally biased stretch (pro residues) spans 1389-1435 (RSPPAREPPGGAPPEVPPVQPPPPPPPPPPPPQQPIPPPPTLEPAPP). The segment covering 1441 to 1455 (GEPAAHPGPSSGAGA) has biased composition (low complexity). Ser1467 is modified (phosphoserine). Composition is skewed to basic and acidic residues over residues 1468-1484 (LERR…EKIM) and 1491-1520 (QDMF…KPEK). An indispensable for interaction with MAGI1 region spans residues 1579-1582 (QTEV).

Belongs to the G-protein coupled receptor 2 family. LN-TM7 subfamily. In terms of assembly, interacts with ELMO1 and DOCK1. When bound to ELMO1 and DOCK1, acts as a module to promote apoptotic cell engulfment. Interacts with MDM2; the interaction results in inhibition of MDM2-mediated ubiquitination and degradation of DLG4/PSD95. Interacts with PARD3 and TIAM1; the interaction is required for correct dendritic localization of PARD3 and TIAM1 and for dendritic spine formation. Interacts with MAGI1, MAGI3 and BAIAP2. Interacts with PHYHIP. Interacts with DLG4 (via PDZ domain). Vasculostatin-120: Interacts with CD36. Vasculostatin-120: Interacts with ARRB2. Interacts with BAIAP3; this interaction is direct. In terms of processing, proteolytically cleaved to produce vasculostatin-40 and vasculostatin-120. Vasculostatin-40 is the major form and is produced through proteolytic cleavage by MMP14 between residues 321 and 329 with cleavage likely to be between Ser-326 and Leu-327. Post-translationally, ubiquitinated. As to expression, in brain, widespread expression in all neuropil-rich zones including spinal cord gray matter, cerebellar molecular layer, cerebral cortex, thalamic nuclei and basal ganglia with no expression in white matter (at protein level). In the cerebellar molecular layer, highly expressed in interneuron processes whereas Purkinje cells and their dendrites show weaker expression (at protein level). In the olfactory bulb, highly expressed in glomeruli (at protein level). In the retina, highly concentrated in the outer and inner plexiform layers (at protein level). Expressed in brain. Enriched in hippocampus and cortex. Also detected in other tissues including bone marrow and spleen.

It is found in the cell membrane. The protein resides in the cell projection. Its subcellular location is the phagocytic cup. The protein localises to the cell junction. It localises to the focal adhesion. It is found in the dendritic spine. The protein resides in the postsynaptic density. Its subcellular location is the secreted. Its function is as follows. Phosphatidylserine receptor which enhances the engulfment of apoptotic cells. Also mediates the binding and engulfment of Gram-negative bacteria. Stimulates production of reactive oxygen species by macrophages in response to Gram-negative bacteria, resulting in enhanced microbicidal macrophage activity. In the gastric mucosa, required for recognition and engulfment of apoptotic gastric epithelial cells. Promotes myoblast fusion. Activates the Rho pathway in a G-protein-dependent manner. Inhibits MDM2-mediated ubiquitination and degradation of DLG4/PSD95, promoting DLG4 stability and regulating synaptic plasticity. Required for the formation of dendritic spines by ensuring the correct localization of PARD3 and TIAM1. Potent inhibitor of angiogenesis in brain and may play a significant role as a mediator of the p53/TP53 signal in suppression of glioblastoma. Inhibits angiogenesis in a CD36-dependent manner. In terms of biological role, inhibits angiogenesis. The protein is Adhesion G protein-coupled receptor B1 of Mus musculus (Mouse).